A 479-amino-acid chain; its full sequence is MAVSSATASSKLILLPHASSSSSLNSTPFRSSTTNTHKLTPLSSSFLHPTTVLRRTPSSTTTPRRTFTVRAARGKFERKKPHVNIGTIGHVDHGKTTLTAALTMALAALGNSAPKKYDEIDAAPEERARGITINTATVEYETENRHYAHVDCPGHADYVKNMITGAAQMDGAILVVSGADGPMPQTKEHIILAKQVGVPNMVVFLNKQDQVDDEELLQLVEIEVRDLLSSYEFPGDDTPIVSGSALLALEALMANPAIKRGDNEWVDKIFQLMDEVDNYIPIPQRQTDLPFLLAVEDVFSITGRGTVATGRVERGTIKVGETVDLVGLRETRNTTVTGVEMFQKILDEALAGDNVGLLLRGVQKTDIQRGMVLAKPGTITPHTKFSAIVYVLKKEEGGRHSPFFAGYRPQFYMRTTDVTGKVTSIMNDKDEESTMVLPGDRVKMVVELIVPVACEQGMRFAIREGGKTVGAGVIQSIIE.

The transit peptide at 1–71 (MAVSSATASS…TPRRTFTVRA (71 aa)) directs the protein to the chloroplast. The segment covering 19-32 (SSSSSLNSTPFRSS) has biased composition (low complexity). Positions 19–43 (SSSSSLNSTPFRSSTTNTHKLTPLS) are disordered. Residues 33–43 (TTNTHKLTPLS) are compositionally biased toward polar residues. A tr-type G domain is found at 80–284 (KPHVNIGTIG…EVDNYIPIPQ (205 aa)). A G1 region spans residues 89-96 (GHVDHGKT). 89-96 (GHVDHGKT) lines the GTP pocket. The G2 stretch occupies residues 130–134 (GITIN). The tract at residues 151 to 154 (DCPG) is G3. Residues 151–155 (DCPGH) and 206–209 (NKQD) contribute to the GTP site. A G4 region spans residues 206–209 (NKQD). Residues 244-246 (SAL) form a G5 region. Asn-333 carries N-linked (GlcNAc...) asparagine glycosylation.

It belongs to the TRAFAC class translation factor GTPase superfamily. Classic translation factor GTPase family. EF-Tu/EF-1A subfamily.

The protein localises to the plastid. Its subcellular location is the chloroplast. In terms of biological role, this protein promotes the GTP-dependent binding of aminoacyl-tRNA to the A-site of ribosomes during protein biosynthesis. The protein is Elongation factor Tu, chloroplastic (TUFA) of Glycine max (Soybean).